Here is a 422-residue protein sequence, read N- to C-terminus: MDFLEIVGQVPLKGEVEISGAKNSALPILAATLLSRQEVKIKSLPQVVDIKAMALLLQNLGASLEWLNPNTLQIGAKSLNHTEATYDLVRKMRASILVLGPLLARFKECLVSLPGGCAIGARPVDLHLKAMQQLGAKITIEQGYIHAKAPKGLKGNDILFDKISVTGTENALMAASLAKGITRIINAAKEPEIAQLCAFLQSGGVEIHGIGSSELKIRGVENDALNLKDIQIIPDRIEAGTYLCVGAITNSQLKINHIIPNHLQAITDKLIEIGFSLDIQENSIEIHPAKKRQAFEITTKEYPGFPTDMQAQFMALATQCLGTSVIEETLFENRFMHASELQRLGANISLKTNVATISGSTELTGSDVMATDLRASSALVLAALVAKGVSRVHRIYHLDRGYERLEDKINALGAKVARLKEK.

Residue 22 to 23 (KN) coordinates phosphoenolpyruvate. Arg93 lines the UDP-N-acetyl-alpha-D-glucosamine pocket. Residue Cys117 is the Proton donor of the active site. 2-(S-cysteinyl)pyruvic acid O-phosphothioketal is present on Cys117. UDP-N-acetyl-alpha-D-glucosamine-binding positions include 122 to 126 (RPVDL), Asp308, and Leu330.

The protein belongs to the EPSP synthase family. MurA subfamily.

It localises to the cytoplasm. The enzyme catalyses phosphoenolpyruvate + UDP-N-acetyl-alpha-D-glucosamine = UDP-N-acetyl-3-O-(1-carboxyvinyl)-alpha-D-glucosamine + phosphate. Its pathway is cell wall biogenesis; peptidoglycan biosynthesis. Its function is as follows. Cell wall formation. Adds enolpyruvyl to UDP-N-acetylglucosamine. This Helicobacter pylori (strain ATCC 700392 / 26695) (Campylobacter pylori) protein is UDP-N-acetylglucosamine 1-carboxyvinyltransferase.